Consider the following 321-residue polypeptide: Mas-related G-protein coupled receptor member H (321 aa).

The Extracellular portion of the chain corresponds to 1–35; that stretch reads MEPLAMTLYPLESTQPTRNKTPNETTWSSEHTDDH. The N-linked (GlcNAc...) asparagine glycan is linked to asparagine 23. The chain crosses the membrane as a helical span at residues 36-56; the sequence is TYFLVSLVICSLGLAGNGLLI. The Cytoplasmic segment spans residues 57-71; sequence WFLIFCIKRKPFTIY. The helical transmembrane segment at 72 to 92 threads the bilayer; it reads ILHLAIADFMVLLCSSIMKLV. The Extracellular portion of the chain corresponds to 93–102; sequence NTFHIYNMTL. Asparagine 99 is a glycosylation site (N-linked (GlcNAc...) asparagine). A helical transmembrane segment spans residues 103–126; the sequence is ESYAILFMIFGYNTGLHLLTAISV. Residues 127–147 are Cytoplasmic-facing; the sequence is ERCLSVLYPIWYQCQRPKHQS. Residues 148 to 168 traverse the membrane as a helical segment; the sequence is AVACMLLWALSVLVSGLENFF. Residues 169-188 lie on the Extracellular side of the membrane; the sequence is CILEVKPQFPECRYVYIFSC. A helical transmembrane segment spans residues 189-209; the sequence is ILTFLVFVPLMIFSNLILFIQ. Topologically, residues 210 to 225 are cytoplasmic; sequence VCCNLKPRQPTKLYVI. A helical membrane pass occupies residues 226 to 246; it reads IMTTVILFLVFAMPMKVLLII. Position 247 (glycine 247) is a topological domain, extracellular. The chain crosses the membrane as a helical span at residues 248–271; it reads YYSSSLDDSVWDSLPYLNMLSTIN. Over 272-320 the chain is Cytoplasmic; sequence CSINPIVYFVVGSLRRKRSRKSLKEALQKVFEEKPVVASRENVTQFSLP.

Belongs to the G-protein coupled receptor 1 family. Mas subfamily.

It localises to the cell membrane. Functionally, orphan receptor. May regulate nociceptor function and/or development, including the sensation or modulation of pain. This chain is Mas-related G-protein coupled receptor member H (Mrgprh), found in Mus musculus (Mouse).